Consider the following 112-residue polypeptide: UPF0122 protein CPE1714 (112 aa).

It belongs to the UPF0122 family.

Its function is as follows. Might take part in the signal recognition particle (SRP) pathway. This is inferred from the conservation of its genetic proximity to ftsY/ffh. May be a regulatory protein. This is UPF0122 protein CPE1714 from Clostridium perfringens (strain 13 / Type A).